Reading from the N-terminus, the 327-residue chain is Probable cell division protein WhiA (327 aa).

The H-T-H motif DNA-binding region spans 275-308; sequence SLEELGRLADPPMTKDAVAGRIRRLLSMADRKAK.

Belongs to the WhiA family.

In terms of biological role, involved in cell division and chromosome segregation. This Mycobacterium avium (strain 104) protein is Probable cell division protein WhiA.